An 87-amino-acid chain; its full sequence is Defensin-like protein 81 (87 aa).

The N-terminal stretch at 1-27 (MTIKKFLPLLLSSLMVYSLILLPIISG) is a signal peptide. Intrachain disulfides connect Cys-33–Cys-69, Cys-37–Cys-57, Cys-43–Cys-67, and Cys-47–Cys-68.

Belongs to the DEFL family.

The protein localises to the secreted. This chain is Defensin-like protein 81, found in Arabidopsis thaliana (Mouse-ear cress).